The sequence spans 1131 residues: Major DNA-binding protein (1131 aa).

The Required for filament formation signature appears at Phe-790–Trp-791. A required for nuclear localization region spans residues Leu-1112–Leu-1131.

It belongs to the herpesviridae major DNA-binding protein family. As to quaternary structure, homooligomers. Forms double-helical filaments necessary for the formation of replication compartments within the host nucleus. Interacts with the origin-binding protein. Interacts with the helicase primase complex; this interaction stimulates primer synthesis activity of the helicase-primase complex. Interacts with the DNA polymerase. Interacts with the alkaline exonuclease; this interaction increases its nuclease processivity.

It is found in the host nucleus. In terms of biological role, single-stranded DNA-binding protein required for DNA replication. Plays several crucial roles in viral infection. Participates in the opening of the viral DNA origin to initiate replication by interacting with the origin-binding protein. May disrupt loops, hairpins and other secondary structures present on ssDNA to reduce and eliminate pausing of viral DNA polymerase at specific sites during elongation. Promotes viral DNA recombination by performing strand-transfer, characterized by the ability to transfer a DNA strand from a linear duplex to a complementary single-stranded DNA circle. Can also catalyze the renaturation of complementary single strands. Additionally, reorganizes the host cell nucleus, leading to the formation of prereplicative sites and replication compartments. This process is driven by the protein which can form double-helical filaments in the absence of DNA. The sequence is that of Major DNA-binding protein from Human herpesvirus 7 (strain JI) (HHV-7).